Consider the following 416-residue polypeptide: Imidazolonepropionase (416 aa).

Positions 81 and 83 each coordinate Fe(3+). Zn(2+)-binding residues include H81 and H83. 4-imidazolone-5-propanoate is bound by residues R90, Y153, and H186. Y153 contacts N-formimidoyl-L-glutamate. H251 is a Fe(3+) binding site. H251 contributes to the Zn(2+) binding site. Residue Q254 participates in 4-imidazolone-5-propanoate binding. D326 contacts Fe(3+). D326 is a Zn(2+) binding site. N-formimidoyl-L-glutamate-binding residues include N328 and G330. T331 is a 4-imidazolone-5-propanoate binding site.

Belongs to the metallo-dependent hydrolases superfamily. HutI family. Requires Zn(2+) as cofactor. Fe(3+) is required as a cofactor.

The protein localises to the cytoplasm. The enzyme catalyses 4-imidazolone-5-propanoate + H2O = N-formimidoyl-L-glutamate. Its pathway is amino-acid degradation; L-histidine degradation into L-glutamate; N-formimidoyl-L-glutamate from L-histidine: step 3/3. Functionally, catalyzes the hydrolytic cleavage of the carbon-nitrogen bond in imidazolone-5-propanoate to yield N-formimidoyl-L-glutamate. It is the third step in the universal histidine degradation pathway. The polypeptide is Imidazolonepropionase (Paracidovorax citrulli (strain AAC00-1) (Acidovorax citrulli)).